A 781-amino-acid polypeptide reads, in one-letter code: Cytosolic phospholipase A2 beta (781 aa).

Residues 1-112 (MAVAEVSRTC…RAGEFRRESF (112 aa)) enclose the C2 domain. Residues Asp-26, Asp-32, Asp-82, Asp-84, and Asp-90 each coordinate Ca(2+). One can recognise a PLA2c domain in the interval 246 to 781 (EAGLRELAVR…VQRRRQRRPH (536 aa)). The active-site Nucleophile is the Ser-335. Residue Asp-615 is the Proton acceptor of the active site.

Ca(2+) is required as a cofactor. Widely expressed. Expressed at higher level in brain, heart, liver, cerebellum and pancreas.

It is found in the cytoplasm. Its subcellular location is the cytosol. The protein resides in the mitochondrion membrane. It localises to the early endosome membrane. The catalysed reaction is a 1,2-diacyl-sn-glycero-3-phosphocholine + H2O = a 1-acyl-sn-glycero-3-phosphocholine + a fatty acid + H(+). The enzyme catalyses a 1-acyl-sn-glycero-3-phosphocholine + H2O = sn-glycerol 3-phosphocholine + a fatty acid + H(+). It catalyses the reaction 1-hexadecanoyl-2-(9Z,12Z-octadecadienoyl)-sn-glycero-3-phosphoethanolamine + H2O = 1-hexadecanoyl-sn-glycero-3-phosphoethanolamine + (9Z,12Z)-octadecadienoate + H(+). It carries out the reaction 1-hexadecanoyl-2-(5Z,8Z,11Z,14Z-eicosatetraenoyl)-sn-glycero-3-phosphoethanolamine + H2O = 1-hexadecanoyl-sn-glycero-3-phosphoethanolamine + (5Z,8Z,11Z,14Z)-eicosatetraenoate + H(+). The catalysed reaction is 1-hexadecanoyl-sn-glycero-3-phosphocholine + H2O = sn-glycerol 3-phosphocholine + hexadecanoate + H(+). The enzyme catalyses 1-hexadecanoyl-2-(5Z,8Z,11Z,14Z-eicosatetraenoyl)-sn-glycero-3-phosphocholine + H2O = 1-hexadecanoyl-sn-glycero-3-phosphocholine + (5Z,8Z,11Z,14Z)-eicosatetraenoate + H(+). It catalyses the reaction 1-hexadecanoyl-2-(5Z,8Z,11Z,14Z-eicosatetraenoyl)-sn-glycero-3-phosphocholine + H2O = 2-(5Z,8Z,11Z,14Z)-eicosatetraenoyl-sn-glycero-3-phosphocholine + hexadecanoate + H(+). Its activity is regulated as follows. Stimulated by cytosolic Ca(2+). Calcium-dependent phospholipase A1 and A2 and lysophospholipase that may play a role in membrane phospholipid remodeling. Its function is as follows. Calcium-dependent phospholipase A2 and lysophospholipase. Cleaves the ester bond of the fatty acyl group attached to the sn-2 position of phosphatidylethanolamines, producing lysophospholipids that may be used in deacylation-reacylation cycles. Hydrolyzes lysophosphatidylcholines with low efficiency but is inefficient toward phosphatidylcholines. In terms of biological role, calcium-dependent phospholipase A1 and A2 and lysophospholipase. Cleaves the ester bond of the fatty acyl group attached to the sn-1 or sn-2 position of diacyl phospholipids (phospholipase A1 and A2 activity, respectively), producing lysophospholipids that may be used in deacylation-reacylation cycles. Can further hydrolyze lysophospholipids enabling complete deacylation. Has no activity toward alkylacyl phospholipids. The chain is Cytosolic phospholipase A2 beta (PLA2G4B) from Homo sapiens (Human).